The following is a 260-amino-acid chain: Major prion protein (260 aa).

The signal sequence occupies residues 1-22 (MANLGCWMLVLFVATWSDLGLC). Residues 23-237 (KKRPKPGGWN…ESQAYYQRGS (215 aa)) form an interaction with GRB2, ERI3 and SYN1 region. Positions 26-112 (PKPGGWNTGG…HNQWNKPSKP (87 aa)) are disordered. 6 consecutive repeat copies span residues 51–58 (PQGGGWGQ), 59–66 (PHGGGWGQ), 67–74 (PHGGGWGQ), 75–82 (PHGGGWGQ), 83–90 (PHGGGWGQ), and 91–98 (PHGGGWGQ). A 6 X 8 AA tandem repeats of P-H-G-G-G-W-G-Q region spans residues 51–98 (PQGGGWGQPHGGGWGQPHGGGWGQPHGGGWGQPHGGGWGQPHGGGWGQ). A compositionally biased stretch (gly residues) spans 52–102 (QGGGWGQPHGGGWGQPHGGGWGQPHGGGWGQPHGGGWGQPHGGGWGQGGGT). Cu(2+) contacts are provided by H68, G69, G70, H76, G77, G78, H84, G85, G86, H92, G93, and G94. C186 and C221 are joined by a disulfide. N-linked (GlcNAc...) asparagine glycosylation is found at N188 and N204. S237 carries the GPI-anchor amidated serine lipid modification. The propeptide at 238–260 (SMVLFSSPPVILLISFLIFLIVG) is removed in mature form.

This sequence belongs to the prion family. As to quaternary structure, monomer and homodimer. Has a tendency to aggregate into amyloid fibrils containing a cross-beta spine, formed by a steric zipper of superposed beta-strands. Soluble oligomers may represent an intermediate stage on the path to fibril formation. Copper binding may promote oligomerization. Interacts with GRB2, APP, ERI3/PRNPIP and SYN1. Mislocalized cytosolically exposed PrP interacts with MGRN1; this interaction alters MGRN1 subcellular location and causes lysosomal enlargement. Interacts with KIAA1191.

It is found in the cell membrane. Its subcellular location is the golgi apparatus. Its function is as follows. Its primary physiological function is unclear. Has cytoprotective activity against internal or environmental stresses. May play a role in neuronal development and synaptic plasticity. May be required for neuronal myelin sheath maintenance. May play a role in iron uptake and iron homeostasis. Soluble oligomers are toxic to cultured neuroblastoma cells and induce apoptosis (in vitro). Association with GPC1 (via its heparan sulfate chains) targets PRNP to lipid rafts. Also provides Cu(2+) or Zn(2+) for the ascorbate-mediated GPC1 deaminase degradation of its heparan sulfate side chains. The sequence is that of Major prion protein (PRNP) from Saimiri sciureus (Common squirrel monkey).